A 599-amino-acid polypeptide reads, in one-letter code: Calcium-dependent protein kinase 10 (599 aa).

Residue G2 is the site of N-myristoyl glycine attachment. Residues R27–R110 form a disordered region. The segment covering V74 to Q84 has biased composition (polar residues). Residues S87–A98 show a composition bias toward low complexity. The region spanning Y133–V391 is the Protein kinase domain. ATP contacts are provided by residues L139–T147 and K162. D257 serves as the catalytic Proton acceptor. The autoinhibitory domain stretch occupies residues A397–I427. EF-hand domains follow at residues D434–N469, L470–I505, E506–G541, and Q544–G575. Residues D447, D449, S451, Q453, E458, D483, D485, S487, T489, E494, D519, D521, S523, Y525, E530, D553, D555, D557, R559, and E564 each coordinate Ca(2+).

This sequence belongs to the protein kinase superfamily. Ser/Thr protein kinase family. CDPK subfamily. As to expression, expressed in roots.

The protein resides in the membrane. It carries out the reaction L-seryl-[protein] + ATP = O-phospho-L-seryl-[protein] + ADP + H(+). The enzyme catalyses L-threonyl-[protein] + ATP = O-phospho-L-threonyl-[protein] + ADP + H(+). Activated by calcium. Autophosphorylation may play an important role in the regulation of the kinase activity. In terms of biological role, may play a role in signal transduction pathways that involve calcium as a second messenger. This chain is Calcium-dependent protein kinase 10, found in Oryza sativa subsp. japonica (Rice).